The following is a 445-amino-acid chain: Chromosomal replication initiator protein DnaA (445 aa).

Positions 1 to 71 (MEEVWLQAQS…SVQSLTDSQT (71 aa)) are domain I, interacts with DnaA modulators. Residues 71 to 108 (TKIELLIAKPKTEKPKQPAASEVTAAEPEACSGPDHST) form a domain II region. The tract at residues 83–106 (EKPKQPAASEVTAAEPEACSGPDH) is disordered. The tract at residues 109 to 325 (NLNPKYTFDT…GMLIRLGAVS (217 aa)) is domain III, AAA+ region. Residues glycine 153, glycine 155, lysine 156, and threonine 157 each contribute to the ATP site. The interval 326-445 (SLTGKNITLD…VDTLRKGLLS (120 aa)) is domain IV, binds dsDNA.

This sequence belongs to the DnaA family. Oligomerizes as a right-handed, spiral filament on DNA at oriC.

The protein resides in the cytoplasm. In terms of biological role, plays an essential role in the initiation and regulation of chromosomal replication. ATP-DnaA binds to the origin of replication (oriC) to initiate formation of the DNA replication initiation complex once per cell cycle. Binds the DnaA box (a 9 base pair repeat at the origin) and separates the double-stranded (ds)DNA. Forms a right-handed helical filament on oriC DNA; dsDNA binds to the exterior of the filament while single-stranded (ss)DNA is stabiized in the filament's interior. The ATP-DnaA-oriC complex binds and stabilizes one strand of the AT-rich DNA unwinding element (DUE), permitting loading of DNA polymerase. After initiation quickly degrades to an ADP-DnaA complex that is not apt for DNA replication. Binds acidic phospholipids. The polypeptide is Chromosomal replication initiator protein DnaA (Geobacter sulfurreducens (strain ATCC 51573 / DSM 12127 / PCA)).